The chain runs to 130 residues: Small ribosomal subunit protein uS8 (130 aa).

It belongs to the universal ribosomal protein uS8 family. Part of the 30S ribosomal subunit.

In terms of biological role, one of the primary rRNA binding proteins, it binds directly to 16S rRNA central domain where it helps coordinate assembly of the platform of the 30S subunit. The polypeptide is Small ribosomal subunit protein uS8 (Methanocella arvoryzae (strain DSM 22066 / NBRC 105507 / MRE50)).